Here is a 201-residue protein sequence, read N- to C-terminus: Peptide deformylase (201 aa).

The tract at residues 1-24 (MANHFSQLAKKSKTNGNSEKIAKE) is disordered. 2 residues coordinate Fe cation: Cys121 and His163. Glu164 is a catalytic residue. His167 serves as a coordination point for Fe cation.

It belongs to the polypeptide deformylase family. Fe(2+) is required as a cofactor.

It catalyses the reaction N-terminal N-formyl-L-methionyl-[peptide] + H2O = N-terminal L-methionyl-[peptide] + formate. Functionally, removes the formyl group from the N-terminal Met of newly synthesized proteins. Requires at least a dipeptide for an efficient rate of reaction. N-terminal L-methionine is a prerequisite for activity but the enzyme has broad specificity at other positions. This is Peptide deformylase from Prochlorococcus marinus (strain MIT 9312).